The sequence spans 978 residues: Alanine--tRNA ligase, chloroplastic/mitochondrial (978 aa).

Residues histidine 655, histidine 659, cysteine 758, and histidine 762 each coordinate Zn(2+). Lysine 773 participates in a covalent cross-link: Glycyl lysine isopeptide (Lys-Gly) (interchain with G-Cter in ubiquitin).

The protein belongs to the class-II aminoacyl-tRNA synthetase family. Monomer. Zn(2+) serves as cofactor.

The protein localises to the plastid. It is found in the chloroplast. Its subcellular location is the mitochondrion. It catalyses the reaction tRNA(Ala) + L-alanine + ATP = L-alanyl-tRNA(Ala) + AMP + diphosphate. Functionally, catalyzes the attachment of alanine to tRNA(Ala) in a two-step reaction: alanine is first activated by ATP to form Ala-AMP and then transferred to the acceptor end of tRNA(Ala). Also edits incorrectly charged tRNA(Ala) via its editing domain. In Arabidopsis thaliana (Mouse-ear cress), this protein is Alanine--tRNA ligase, chloroplastic/mitochondrial (EMB86).